We begin with the raw amino-acid sequence, 132 residues long: Histone H2B.9 (132 aa).

Positions Met-1 to Glu-11 are enriched in basic and acidic residues. The interval Met-1 to Ser-41 is disordered. Ala-2 is modified (n,N,N-trimethylalanine; alternate). Ala-2 carries the post-translational modification N,N-dimethylalanine; alternate. Ala-2 is subject to N-methylalanine; alternate. Lys-4 bears the N6-methyllysine mark. N6-acetyllysine is present on residues Lys-7, Lys-12, Lys-20, and Lys-21. Lys-128 participates in a covalent cross-link: Glycyl lysine isopeptide (Lys-Gly) (interchain with G-Cter in ubiquitin).

Belongs to the histone H2B family. The nucleosome is a histone octamer containing two molecules each of H2A, H2B, H3 and H4 assembled in one H3-H4 heterotetramer and two H2A-H2B heterodimers. The octamer wraps approximately 147 bp of DNA. In terms of processing, can be acetylated to form H2BK6ac, H2BK33ac and H2BK34ac. Post-translationally, monoubiquitinated by BRE1 to form H2BK143ub1 and deubiquitinated by UBP26. Required for heterochromatic histone H3 di- and trimethylation at H3K4me. May give a specific tag for epigenetic transcriptional activation.

The protein localises to the nucleus. It localises to the chromosome. Its function is as follows. Core component of nucleosome. Nucleosomes wrap and compact DNA into chromatin, limiting DNA accessibility to the cellular machineries which require DNA as a template. Histones thereby play a central role in transcription regulation, DNA repair, DNA replication and chromosomal stability. DNA accessibility is regulated via a complex set of post-translational modifications of histones, also called histone code, and nucleosome remodeling. In Arabidopsis thaliana (Mouse-ear cress), this protein is Histone H2B.9.